We begin with the raw amino-acid sequence, 270 residues long: Putative pyruvate, phosphate dikinase regulatory protein (270 aa).

151–158 lines the ADP pocket; sequence GVSRTSKT.

It belongs to the pyruvate, phosphate/water dikinase regulatory protein family. PDRP subfamily.

The enzyme catalyses N(tele)-phospho-L-histidyl/L-threonyl-[pyruvate, phosphate dikinase] + ADP = N(tele)-phospho-L-histidyl/O-phospho-L-threonyl-[pyruvate, phosphate dikinase] + AMP + H(+). It carries out the reaction N(tele)-phospho-L-histidyl/O-phospho-L-threonyl-[pyruvate, phosphate dikinase] + phosphate + H(+) = N(tele)-phospho-L-histidyl/L-threonyl-[pyruvate, phosphate dikinase] + diphosphate. In terms of biological role, bifunctional serine/threonine kinase and phosphorylase involved in the regulation of the pyruvate, phosphate dikinase (PPDK) by catalyzing its phosphorylation/dephosphorylation. The sequence is that of Putative pyruvate, phosphate dikinase regulatory protein from Streptococcus gordonii (strain Challis / ATCC 35105 / BCRC 15272 / CH1 / DL1 / V288).